The primary structure comprises 444 residues: Glutamyl-tRNA reductase (444 aa).

Residues 49–52, Ser109, 114–116, and Gln120 contribute to the substrate site; these read TCNR and ETQ. The active-site Nucleophile is Cys50. 189-194 contacts NADP(+); that stretch reads GAGKMG.

The protein belongs to the glutamyl-tRNA reductase family. Homodimer.

It carries out the reaction (S)-4-amino-5-oxopentanoate + tRNA(Glu) + NADP(+) = L-glutamyl-tRNA(Glu) + NADPH + H(+). It functions in the pathway porphyrin-containing compound metabolism; protoporphyrin-IX biosynthesis; 5-aminolevulinate from L-glutamyl-tRNA(Glu): step 1/2. Catalyzes the NADPH-dependent reduction of glutamyl-tRNA(Glu) to glutamate 1-semialdehyde (GSA). This chain is Glutamyl-tRNA reductase, found in Bacillus cereus (strain G9842).